Reading from the N-terminus, the 483-residue chain is V-type proton ATPase subunit H (483 aa).

Position 483 is a phosphoserine (Ser483).

The protein belongs to the V-ATPase H subunit family. In terms of assembly, V-ATPase is a heteromultimeric enzyme made up of two complexes: the ATP-hydrolytic V1 complex and the proton translocation V0 complex. The V1 complex consists of three catalytic AB heterodimers that form a heterohexamer, three peripheral stalks each consisting of EG heterodimers, one central rotor including subunits D and F, and the regulatory subunits C and H. The proton translocation complex V0 consists of the proton transport subunit a, a ring of proteolipid subunits c9c'', rotary subunit d, subunits e and f, and the accessory subunits ATP6AP1/Ac45 and ATP6AP2/PRR. Interacts with AP2M1. Interacts with TM9SF4 in colon cancer cells. (Microbial infection) Interacts with HIV-1 Nef protein. As to quaternary structure, (Microbial infection) Interacts with M.tuberculosis PtpA, which blocks V-ATPase trafficking and phagosome acidification. In terms of tissue distribution, widely expressed.

Its subcellular location is the cytoplasmic vesicle. The protein localises to the clathrin-coated vesicle membrane. Functionally, subunit of the V1 complex of vacuolar(H+)-ATPase (V-ATPase), a multisubunit enzyme composed of a peripheral complex (V1) that hydrolyzes ATP and a membrane integral complex (V0) that translocates protons. V-ATPase is responsible for acidifying and maintaining the pH of intracellular compartments and in some cell types, is targeted to the plasma membrane, where it is responsible for acidifying the extracellular environment. Subunit H is essential for V-ATPase activity, but not for the assembly of the complex. Involved in the endocytosis mediated by clathrin-coated pits, required for the formation of endosomes. In Homo sapiens (Human), this protein is V-type proton ATPase subunit H (ATP6V1H).